We begin with the raw amino-acid sequence, 222 residues long: 7-cyano-7-deazaguanine synthase (222 aa).

ATP is bound at residue 9–19 (ISGGMDSALSA). Zn(2+)-binding residues include cysteine 188, cysteine 196, cysteine 199, and cysteine 202.

This sequence belongs to the QueC family. Requires Zn(2+) as cofactor.

The enzyme catalyses 7-carboxy-7-deazaguanine + NH4(+) + ATP = 7-cyano-7-deazaguanine + ADP + phosphate + H2O + H(+). It functions in the pathway purine metabolism; 7-cyano-7-deazaguanine biosynthesis. Catalyzes the ATP-dependent conversion of 7-carboxy-7-deazaguanine (CDG) to 7-cyano-7-deazaguanine (preQ(0)). This is 7-cyano-7-deazaguanine synthase from Sulfurovum sp. (strain NBC37-1).